The sequence spans 235 residues: MASSSNWLSGVNVVLVMAYGSLVFVLLFIFVKRQIMRFAMKSRRGPHVPVGHNAPKDLKEEIDIRLSRVQDIKYEPQLLADDDTRLLQLETQGSQKIPFHAEGRHPCSLMGKNFRSYLLDLRNTSTPFKGVRKALIDTLLDGYETARYGTGVFGQSEYLRYQEALSELATVVKARIGSSQRQHQSAAKDLTQSPEMSPTTIQVTYLPSSQKSKRPKHFLELKSFKDNYNTLESTL.

A helical membrane pass occupies residues 11–31 (VNVVLVMAYGSLVFVLLFIFV).

It localises to the membrane. The protein resides in the golgi apparatus. Its subcellular location is the mitochondrion. Its function is as follows. General regulator of phagocytosis. Required to uptake Gram negative bacterium by macrophages. The polypeptide is Protein C1orf43 homolog (Rattus norvegicus (Rat)).